The following is a 192-amino-acid chain: Small ribosomal subunit protein uS5 (192 aa).

An S5 DRBM domain is found at 20 to 83 (FVDRLVHINR…EAAKRGLIRV (64 aa)). Residues 165 to 192 (ARRGLKVSALQARRRDAEPGSADSADAA) are disordered.

The protein belongs to the universal ribosomal protein uS5 family. Part of the 30S ribosomal subunit. Contacts proteins S4 and S8.

With S4 and S12 plays an important role in translational accuracy. In terms of biological role, located at the back of the 30S subunit body where it stabilizes the conformation of the head with respect to the body. In Methylobacterium sp. (strain 4-46), this protein is Small ribosomal subunit protein uS5.